A 538-amino-acid polypeptide reads, in one-letter code: Putative cysteine ligase BshC (538 aa).

The stretch at 460 to 485 (KINEQIELLERMLKRNIEKKHEVELN) forms a coiled coil.

The protein belongs to the BshC family.

Involved in bacillithiol (BSH) biosynthesis. May catalyze the last step of the pathway, the addition of cysteine to glucosamine malate (GlcN-Mal) to generate BSH. This is Putative cysteine ligase BshC from Bacillus cereus (strain Q1).